Here is a 107-residue protein sequence, read N- to C-terminus: Late embryogenesis abundant protein M10 (107 aa).

An N-terminal signal peptide occupies residues 1 to 19 (MGNLMSLVLVALLFSLSLA).

Functionally, may be involved in the acquisition of desiccation tolerance during late phase of embryogenesis. This chain is Late embryogenesis abundant protein M10, found in Arabidopsis thaliana (Mouse-ear cress).